We begin with the raw amino-acid sequence, 955 residues long: Glycine dehydrogenase (decarboxylating) (955 aa).

Residue lysine 702 is modified to N6-(pyridoxal phosphate)lysine.

This sequence belongs to the GcvP family. The glycine cleavage system is composed of four proteins: P, T, L and H. Pyridoxal 5'-phosphate is required as a cofactor.

It catalyses the reaction N(6)-[(R)-lipoyl]-L-lysyl-[glycine-cleavage complex H protein] + glycine + H(+) = N(6)-[(R)-S(8)-aminomethyldihydrolipoyl]-L-lysyl-[glycine-cleavage complex H protein] + CO2. Its function is as follows. The glycine cleavage system catalyzes the degradation of glycine. The P protein binds the alpha-amino group of glycine through its pyridoxal phosphate cofactor; CO(2) is released and the remaining methylamine moiety is then transferred to the lipoamide cofactor of the H protein. This chain is Glycine dehydrogenase (decarboxylating), found in Stenotrophomonas maltophilia (strain K279a).